Here is a 505-residue protein sequence, read N- to C-terminus: MGEKNSSKVLTTGFGIPVGDDQNSLTAGNRGPVLMQDVHLLDKLSHFDHERIPERVVHAKGAGAGGYFEVTADVTKYTKAKFLSEIGKRTEVFVRFSTVGGEKGSADSARDPRGFAVKFYTEDGNYDLVGNNTPVFFIRDPLKFPDFIHTQKRNPATNCKDPDMFWDFLSLTPESIHQVTILFSDRGTPATYRNMNGYSSHTYKWYNEKGEYFWVQYHFKTDQGIKNLTLEEAEKIGGSDPDHATRDLYEAIKKGDYPSWTLEMQIMTPEQAEDYRFDIRDITKVWPHGDFPTMKIGKLVLNRNPTNYFAEVEQAAFSPANLVPGIGISPDKMLQGRVFSYHDTHIHRLGPNYNLIPVNAPKYSPENSYQRDGFMRVDANGGSGPNYWPNSFGGPSPDSVYLEPPFGVSGLAARTLYTHPNDDFVQAGNLYRDVMTDYDRENLVGNIVSHLSAAQKRIQLRQTALFFKADRDYGSRVAKGLELDIKEVERLANMTNEERARATER.

Active-site residues include H58 and N131. A heme-binding site is contributed by Y341.

The protein belongs to the catalase family. The cofactor is heme.

It catalyses the reaction 2 H2O2 = O2 + 2 H2O. Its function is as follows. Decomposes hydrogen peroxide into water and oxygen; serves to protect cells from the toxic effects of hydrogen peroxide. This is Catalase (kat) from Methanosarcina barkeri (strain Fusaro / DSM 804).